Here is a 307-residue protein sequence, read N- to C-terminus: Small ribosomal subunit biogenesis GTPase RsgA (307 aa).

One can recognise a CP-type G domain in the interval 80–237; sequence KADLRQTIVS…IVDTPGIKEF (158 aa). Residues 129-132 and 180-188 contribute to the GTP site; these read NKID and GQSGVGKSS. 4 residues coordinate Zn(2+): Cys-261, Cys-266, His-268, and Cys-274.

It belongs to the TRAFAC class YlqF/YawG GTPase family. RsgA subfamily. Monomer. Associates with 30S ribosomal subunit, binds 16S rRNA. Zn(2+) is required as a cofactor.

It is found in the cytoplasm. Functionally, one of several proteins that assist in the late maturation steps of the functional core of the 30S ribosomal subunit. Helps release RbfA from mature subunits. May play a role in the assembly of ribosomal proteins into the subunit. Circularly permuted GTPase that catalyzes slow GTP hydrolysis, GTPase activity is stimulated by the 30S ribosomal subunit. In Borreliella afzelii (strain PKo) (Borrelia afzelii), this protein is Small ribosomal subunit biogenesis GTPase RsgA.